A 276-amino-acid chain; its full sequence is Energy-coupling factor transporter ATP-binding protein EcfA1 (276 aa).

In terms of domain architecture, ABC transporter spans 2–237 (IEIKNLKFKY…GSELVDLGLD (236 aa)). ATP is bound at residue 37 to 44 (GHNGSGKS).

The protein belongs to the ABC transporter superfamily. Energy-coupling factor EcfA family. Forms a stable energy-coupling factor (ECF) transporter complex composed of 2 membrane-embedded substrate-binding proteins (S component), 2 ATP-binding proteins (A component) and 2 transmembrane proteins (T component).

It localises to the cell membrane. In terms of biological role, ATP-binding (A) component of a common energy-coupling factor (ECF) ABC-transporter complex. Unlike classic ABC transporters this ECF transporter provides the energy necessary to transport a number of different substrates. The polypeptide is Energy-coupling factor transporter ATP-binding protein EcfA1 (Streptococcus thermophilus (strain CNRZ 1066)).